A 561-amino-acid chain; its full sequence is SH3 domain-binding protein 2 (561 aa).

Residues 26 to 130 (GVAKAGYLHK…WMALLRREIG (105 aa)) form the PH domain. Disordered regions lie at residues 160 to 316 (VDIS…GACS) and 333 to 451 (KLKS…YEKV). Over residues 170–188 (DNEDYEHDDEDDSYLEPDS) the composition is skewed to acidic residues. Residues Tyr174 and Tyr183 each carry the phosphotyrosine; by SYK modification. The SH3-binding signature appears at 201 to 210 (PPAYPPPPVP). Pro residues-rich tracts occupy residues 202-213 (PAYPPPPVPTPR) and 233-242 (PLLPPPPPKH). The segment covering 252–266 (EDSKRDPLCPRRAEP) has biased composition (basic and acidic residues). Ser278 is subject to Phosphoserine. Residues 342–354 (RGPPTSEPPPVPA) show a composition bias toward pro residues. 2 positions are modified to phosphoserine: Ser416 and Ser427. Tyr448 carries the post-translational modification Phosphotyrosine; by SYK. The SH2 domain maps to 457-555 (VFVNTTESCE…HQSLLLRHPY (99 aa)).

Phosphorylated. Phosphorylation at Tyr-448 may stimulate the activity of the LYN kinase. In terms of tissue distribution, expressed in a variety of tissues including lung, liver, skeletal muscle, kidney and pancreas.

Its function is as follows. Binds differentially to the SH3 domains of certain proteins of signal transduction pathways. Binds to phosphatidylinositols; linking the hemopoietic tyrosine kinase fes to the cytoplasmic membrane in a phosphorylation dependent mechanism. This is SH3 domain-binding protein 2 (SH3BP2) from Homo sapiens (Human).